Here is a 92-residue protein sequence, read N- to C-terminus: uncharacterized protein (92 aa).

A signal peptide spans 1–29; that stretch reads MAAQTDYKKQVVGILLSLAFVLFVFSFSE.

This is an uncharacterized protein from Bacillus subtilis (strain 168).